The chain runs to 940 residues: Isoleucine--tRNA ligase (940 aa).

Positions 58–68 (PYANGDIHIGH) match the 'HIGH' region motif. L-isoleucyl-5'-AMP is bound at residue Glu564. The short motif at 605–609 (KMSKS) is the 'KMSKS' region element. Lys608 is an ATP binding site. Residues Cys903, Cys906, Cys923, and Cys926 each coordinate Zn(2+).

The protein belongs to the class-I aminoacyl-tRNA synthetase family. IleS type 1 subfamily. As to quaternary structure, monomer. Zn(2+) is required as a cofactor.

The protein resides in the cytoplasm. The enzyme catalyses tRNA(Ile) + L-isoleucine + ATP = L-isoleucyl-tRNA(Ile) + AMP + diphosphate. In terms of biological role, catalyzes the attachment of isoleucine to tRNA(Ile). As IleRS can inadvertently accommodate and process structurally similar amino acids such as valine, to avoid such errors it has two additional distinct tRNA(Ile)-dependent editing activities. One activity is designated as 'pretransfer' editing and involves the hydrolysis of activated Val-AMP. The other activity is designated 'posttransfer' editing and involves deacylation of mischarged Val-tRNA(Ile). In Shewanella halifaxensis (strain HAW-EB4), this protein is Isoleucine--tRNA ligase.